We begin with the raw amino-acid sequence, 248 residues long: 3-deoxy-manno-octulosonate cytidylyltransferase (248 aa).

This sequence belongs to the KdsB family.

The protein resides in the cytoplasm. The catalysed reaction is 3-deoxy-alpha-D-manno-oct-2-ulosonate + CTP = CMP-3-deoxy-beta-D-manno-octulosonate + diphosphate. It functions in the pathway nucleotide-sugar biosynthesis; CMP-3-deoxy-D-manno-octulosonate biosynthesis; CMP-3-deoxy-D-manno-octulosonate from 3-deoxy-D-manno-octulosonate and CTP: step 1/1. The protein operates within bacterial outer membrane biogenesis; lipopolysaccharide biosynthesis. Activates KDO (a required 8-carbon sugar) for incorporation into bacterial lipopolysaccharide in Gram-negative bacteria. The protein is 3-deoxy-manno-octulosonate cytidylyltransferase of Escherichia fergusonii (strain ATCC 35469 / DSM 13698 / CCUG 18766 / IAM 14443 / JCM 21226 / LMG 7866 / NBRC 102419 / NCTC 12128 / CDC 0568-73).